Consider the following 314-residue polypeptide: Protoheme IX farnesyltransferase (314 aa).

The next 8 membrane-spanning stretches (helical) occupy residues 36 to 56 (IGIV…AISF), 65 to 85 (WGTF…GCIV), 114 to 134 (SVLT…MFTS), 135 to 155 (WYAT…YTIW), 179 to 199 (WAAI…IMFI), 237 to 257 (IIVY…TMGI), 259 to 279 (FAVI…TGLF), and 290 to 310 (IFIF…IVKL).

The protein belongs to the UbiA prenyltransferase family. Protoheme IX farnesyltransferase subfamily. As to quaternary structure, interacts with CtaA.

The protein resides in the cell membrane. The catalysed reaction is heme b + (2E,6E)-farnesyl diphosphate + H2O = Fe(II)-heme o + diphosphate. The protein operates within porphyrin-containing compound metabolism; heme O biosynthesis; heme O from protoheme: step 1/1. Functionally, converts heme B (protoheme IX) to heme O by substitution of the vinyl group on carbon 2 of heme B porphyrin ring with a hydroxyethyl farnesyl side group. The chain is Protoheme IX farnesyltransferase from Oceanobacillus iheyensis (strain DSM 14371 / CIP 107618 / JCM 11309 / KCTC 3954 / HTE831).